Reading from the N-terminus, the 117-residue chain is NADH-ubiquinone oxidoreductase chain 3 (117 aa).

Helical transmembrane passes span 4–24 (IIII…LASI), 60–80 (ITII…MIII), and 86–106 (IMIW…GLYH).

Belongs to the complex I subunit 3 family.

Its subcellular location is the mitochondrion membrane. It catalyses the reaction a ubiquinone + NADH + 5 H(+)(in) = a ubiquinol + NAD(+) + 4 H(+)(out). In terms of biological role, core subunit of the mitochondrial membrane respiratory chain NADH dehydrogenase (Complex I) that is believed to belong to the minimal assembly required for catalysis. Complex I functions in the transfer of electrons from NADH to the respiratory chain. The immediate electron acceptor for the enzyme is believed to be ubiquinone. The chain is NADH-ubiquinone oxidoreductase chain 3 (mt:ND3) from Drosophila yakuba (Fruit fly).